The following is a 285-amino-acid chain: Putative hydrolase DDAH2 (285 aa).

Catalysis depends on His171, which acts as the Proton donor. Catalysis depends on Cys276, which acts as the Nucleophile.

The protein belongs to the DDAH family. Phosphorylated by TBK1. Phosphorylation inhibits the translocation into the mitochondrion upon Sendai viral infection.

The protein resides in the cytoplasm. The protein localises to the mitochondrion. Putative hydrolase with unknown substrate. Does not hydrolyze N(G),N(G)-dimethyl-L-arginine (ADMA) which acts as an inhibitor of NOS. In endothelial cells, induces expression of vascular endothelial growth factor (VEGF) via phosphorylation of the transcription factor SP1 by PKA in a process that is independent of NO and NO synthase. Similarly, enhances pancreatic insulin secretion through SP1-mediated transcriptional up-regulation of secretagogin/SCGN, an insulin vesicle docking protein. Upon viral infection, relocates to mitochondria where it promotes mitochondrial fission through activation of DNM1L leading to the inhibition of innate response activation mediated by MAVS. This Bos taurus (Bovine) protein is Putative hydrolase DDAH2 (DDAH2).